The primary structure comprises 576 residues: Capsid protein (576 aa).

The disordered stretch occupies residues 489–576 (GYREPKPKPG…GLLALLKEKK (88 aa)). The segment covering 496-509 (KPGPPETLIPPGAP) has biased composition (pro residues). Positions 520–537 (TESDDFDTGDSEEEEEDH) are enriched in acidic residues. The segment covering 538–551 (QDPRWVRESLDKLT) has biased composition (basic and acidic residues). Residues 562–576 (QQLGKGLLALLKEKK) are compositionally biased toward low complexity.

It belongs to the anelloviridae capsid protein family.

It localises to the virion. Self-assembles to form an icosahedral capsid with a T=1 symmetry, about 30 nm in diameter, and consisting of 60 capsid proteins. The capsid encapsulates the genomic DNA. Capsid protein is involved in attachment and entry into the host cell. This Torque teno canis virus (isolate Cf-TTV10) protein is Capsid protein.